Reading from the N-terminus, the 75-residue chain is MAMALVDGRISAQEVEVQLTLRVPHMCALSLVKNDGQGVVVVGGVFVFPFNGLLGGEGSFGHWCCGSVLLWCLVV.

This is an uncharacterized protein from Saccharomyces cerevisiae (strain ATCC 204508 / S288c) (Baker's yeast).